Here is a 668-residue protein sequence, read N- to C-terminus: Small ribosomal subunit protein mS81 (rPPR8) (668 aa).

The transit peptide at 1–36 (MRYQQWRLMLLRSYHRSHLPYLSPCSQVTSISSRSF) directs the protein to the mitochondrion. PPR repeat units lie at residues 286-320 (DEKT…GYEV), 321-355 (EIET…SSSS), 396-430 (TDSL…GYVP), 431-465 (SGDM…GNNL), 466-496 (DDKA…MVGN), 502-537 (ADYS…QLKP), and 543-577 (KSLV…GFPP).

The protein belongs to the PPR family. P subfamily. As to quaternary structure, component of the mitochondrial ribosome small subunit.

It localises to the mitochondrion. This chain is Small ribosomal subunit protein mS81 (rPPR8), found in Arabidopsis thaliana (Mouse-ear cress).